Consider the following 174-residue polypeptide: UPF0316 protein Dhaf_3052 (174 aa).

The next 3 helical transmembrane spans lie at 4–24, 35–55, and 59–79; these read ILQF…LTTI, VYAS…LSII, and LDSY…VYLG.

It belongs to the UPF0316 family.

It localises to the cell membrane. The sequence is that of UPF0316 protein Dhaf_3052 from Desulfitobacterium hafniense (strain DSM 10664 / DCB-2).